A 1037-amino-acid polypeptide reads, in one-letter code: Glycine dehydrogenase (decarboxylating) 1, mitochondrial (1037 aa).

Residues M1–S67 constitute a mitochondrion transit peptide. C98 carries the post-translational modification S-glutathionyl cysteine; transient. 2 positions are modified to S-glutathionyl cysteine: C402 and C463. The residue at position 774 (K774) is an N6-(pyridoxal phosphate)lysine. 3 positions are modified to S-glutathionyl cysteine; transient: C777, C943, and C1022.

This sequence belongs to the GcvP family. As to quaternary structure, homodimer. The glycine cleavage system is composed of four proteins: P, T, L and H. It depends on pyridoxal 5'-phosphate as a cofactor. Glutathionylated at Cys-98, Cys-777, Cys-943 and Cys-1022 after S-nitrosoglutathione treatment. Post-translationally, S-nitrosylated at unknown positions by nitric oxide. As to expression, expressed in leaves. Detected in roots, stems, flowers and siliques.

The protein resides in the mitochondrion. The enzyme catalyses N(6)-[(R)-lipoyl]-L-lysyl-[glycine-cleavage complex H protein] + glycine + H(+) = N(6)-[(R)-S(8)-aminomethyldihydrolipoyl]-L-lysyl-[glycine-cleavage complex H protein] + CO2. Inhibited by harpin, S-nitrosoglutathione (GSNO), nitric oxide, N-ethylmaleimide and 5,5'-dithiobis-(2-nitrobenzoic acid). The glycine decarboxylase (GDC) or glycine cleavage system catalyzes the degradation of glycine. The P protein binds the alpha-amino group of glycine through its pyridoxal phosphate cofactor; CO(2) is released and the remaining methylamine moiety is then transferred to the lipoamide cofactor of the H protein. This is Glycine dehydrogenase (decarboxylating) 1, mitochondrial (GLDP1) from Arabidopsis thaliana (Mouse-ear cress).